A 210-amino-acid polypeptide reads, in one-letter code: Large ribosomal subunit protein uL3 (210 aa).

It belongs to the universal ribosomal protein uL3 family. As to quaternary structure, part of the 50S ribosomal subunit. Forms a cluster with proteins L14 and L19.

One of the primary rRNA binding proteins, it binds directly near the 3'-end of the 23S rRNA, where it nucleates assembly of the 50S subunit. This Geobacter metallireducens (strain ATCC 53774 / DSM 7210 / GS-15) protein is Large ribosomal subunit protein uL3.